A 962-amino-acid polypeptide reads, in one-letter code: MPPSMIRVLYATDGCAITYSLMLLTGQEPSGAVYVVSYAWDGAGLDEAFSLPGERAEAELLARRPGVTFCLTGHVASVRVRPVFVAAATPAVVRALCRGEPLAARDVLEAMDEAATFALHDGLIAALTMVLEQVRPRTGNAEYAPERPLRSIAVGRRGLTSLFVHHETQTLAAFRRLYGNHNTPFWYVARFGPEEKTLVLATRLHLFHPRPAYDLRALKDLLLTYNPRVDPNPSGLDPAGLLSFAALSRFCCLSGYARGPAAAHAARYVDERVRADRAEMGVLRDYISHDRGSLKLPDREFVTYVYLAHFESFNRARLREHLDAVNVTDPAAPVGRSPLGERAAAAFFRHVRAQLNIRDYVAQNVTPSVARLAPAMGAGYVEDRTYAALAADAPRGLCDAAAGLARRVTAVEERLAPHGWVRAPDEEQQQPGADGAVLRRLLELAAAPGGGRARTALGALLGLPDACPPAPVYRVELAHRRQAFAVLAGDAWGRATARRDAAPEMAAHEPAAQMYVSRHEVFNARLAVTNIVLDVDFRLARPVPAGTLEAAMRGFRRAVLDALALLFPEADGDWAAHPCYVYKSACPPGGALAAAAGSASAASSDDGLEEAPWDDDAALADFGAAPGDEDWADWDAGVPAEVYTCDDDEVGVGIGGAGGDPGASALVRAPVPADERPPCGCRAKMGFRVCTPVPSPYAVAGADTVRGLARVLQQAVLLERDFIEPMGPYLQDFTFVDTGVYAHGRSLRLPFFAKVDGGGCHGRLLPFGDAPPGFDDPRNFHFHARPAHAVTRVLHSLGGEYESFFERKAARNREAFFARRTPLADMLRGLAVDAEDRRALEAFVADVAMAPVLRHLDAHFNGRAHEYAGATAQRVVAKPDWVLFQLCGSARFSCLRARHARSPPARTFVALSVDAHDRLCISLSQQCFATKCGSNATRTIFTAEVGQSCSSAGARCTSSSSG.

The CHC2-type zinc-finger motif lies at 894 to 932 (CLRARHARSPPARTFVALSVDAHDRLCISLSQQCFATKC).

This sequence belongs to the herpesviridae DNA primase family. Associates with the helicase and the primase-associated factor to form the helicase-primase factor.

It is found in the host nucleus. In terms of biological role, essential component of the helicase/primase complex. Unwinds the DNA at the replication forks and generates single-stranded DNA for both leading and lagging strand synthesis. The primase initiates primer synthesis and thereby produces large amount of short RNA primers on the lagging strand that the polymerase elongates using dNTPs. This chain is DNA primase (UL52), found in Sus scrofa (Pig).